The following is a 391-amino-acid chain: Nuclear hormone receptor family member nhr-115 (391 aa).

Positions 5–77 (LFPCQICGQN…IGMDASKFQY (73 aa)) form a DNA-binding region, nuclear receptor. An NR C4-type zinc finger spans residues 8-28 (CQICGQNSHGTHFGIVSCRAC). Residues 41–65 (ARKGCLTNFKDKGSCFCKPCRLRKC) form an NR C4-type; atypical zinc finger. The NR LBD domain maps to 130-388 (YLDHGCETPI…FSHPEMFDDS (259 aa)).

The protein belongs to the nuclear hormone receptor family.

It localises to the nucleus. In terms of biological role, orphan nuclear receptor. This Caenorhabditis elegans protein is Nuclear hormone receptor family member nhr-115 (nhr-115).